The chain runs to 324 residues: Phospho-N-acetylmuramoyl-pentapeptide-transferase (324 aa).

10 helical membrane-spanning segments follow: residues valine 5–isoleucine 25, glycine 50–methionine 70, leucine 77–leucine 97, leucine 117–serine 137, leucine 147–serine 167, leucine 176–tryptophan 196, isoleucine 203–histidine 223, valine 227–leucine 247, leucine 250–isoleucine 270, and valine 304–isoleucine 324.

This sequence belongs to the glycosyltransferase 4 family. MraY subfamily. Requires Mg(2+) as cofactor.

The protein resides in the cell membrane. It carries out the reaction UDP-N-acetyl-alpha-D-muramoyl-L-alanyl-gamma-D-glutamyl-meso-2,6-diaminopimeloyl-D-alanyl-D-alanine + di-trans,octa-cis-undecaprenyl phosphate = di-trans,octa-cis-undecaprenyl diphospho-N-acetyl-alpha-D-muramoyl-L-alanyl-D-glutamyl-meso-2,6-diaminopimeloyl-D-alanyl-D-alanine + UMP. Its pathway is cell wall biogenesis; peptidoglycan biosynthesis. Functionally, catalyzes the initial step of the lipid cycle reactions in the biosynthesis of the cell wall peptidoglycan: transfers peptidoglycan precursor phospho-MurNAc-pentapeptide from UDP-MurNAc-pentapeptide onto the lipid carrier undecaprenyl phosphate, yielding undecaprenyl-pyrophosphoryl-MurNAc-pentapeptide, known as lipid I. The sequence is that of Phospho-N-acetylmuramoyl-pentapeptide-transferase from Geobacillus sp. (strain WCH70).